The primary structure comprises 245 residues: Uridylate kinase (245 aa).

Residue 12–15 (KLSG) coordinates ATP. Residues 20–25 (GEKGVG) are involved in allosteric activation by GTP. G54 provides a ligand contact to UMP. Residues G55 and R59 each coordinate ATP. UMP contacts are provided by residues D74 and 135-142 (IGSPYFST). 3 residues coordinate ATP: N163, Y169, and D172.

Belongs to the UMP kinase family. In terms of assembly, homohexamer.

It is found in the cytoplasm. It catalyses the reaction UMP + ATP = UDP + ADP. The protein operates within pyrimidine metabolism; CTP biosynthesis via de novo pathway; UDP from UMP (UMPK route): step 1/1. Its activity is regulated as follows. Allosterically activated by GTP. Inhibited by UTP. Its function is as follows. Catalyzes the reversible phosphorylation of UMP to UDP. In Streptococcus thermophilus (strain ATCC BAA-491 / LMD-9), this protein is Uridylate kinase.